We begin with the raw amino-acid sequence, 374 residues long: L-serine/homoserine O-acetyltransferase (374 aa).

In terms of domain architecture, AB hydrolase-1 spans 46-357 (AVLVLTGLSP…TPAGHDAFLV (312 aa)). Catalysis depends on S149, which acts as the Nucleophile. Active-site residues include D319 and H352.

It belongs to the AB hydrolase superfamily. MetX family. Homodimer.

The protein localises to the cytoplasm. It carries out the reaction L-serine + acetyl-CoA = O-acetyl-L-serine + CoA. The enzyme catalyses L-homoserine + acetyl-CoA = O-acetyl-L-homoserine + CoA. It participates in antibiotic biosynthesis. Functionally, involved in the biosynthesis of the antibiotic D-cycloserine (DCS), a cyclic structural analog of D-alanine, used as an antitubercular agent. Catalyzes the transfer of the acetyl group from acetyl-CoA to the hydroxyl group of L-serine to yield the activated serine, O-acetyl-L-serine. It prefers L-serine over L-homoserine. In Streptomyces lavendulae, this protein is L-serine/homoserine O-acetyltransferase.